Here is a 372-residue protein sequence, read N- to C-terminus: Serine protease 44 (372 aa).

An N-terminal signal peptide occupies residues 1 to 25 (MAFQGCDCFGLLVWLLLLQTRLGKA). The Extracellular segment spans residues 26–351 (RMVPGTPSLS…KELSRASCWK (326 aa)). A disordered region spans residues 31–72 (TPSLSPLPSENGLDDSGVNPQERPLTGMPETSLPRKPGDSTR). A Peptidase S1 domain is found at 112–345 (IVGGRPAPAR…YRDWIIKELS (234 aa)). Cys-137 and Cys-153 form a disulfide bridge. Residues His-152 and Asp-197 each act as charge relay system in the active site. Asn-208 is a glycosylation site (N-linked (GlcNAc...) asparagine). Disulfide bonds link Cys-231/Cys-303, Cys-262/Cys-283, and Cys-293/Cys-321. Ser-297 functions as the Charge relay system in the catalytic mechanism. A helical transmembrane segment spans residues 352–372 (LSGFLVLSVCLVLHLAIVVAL).

It belongs to the peptidase S1 family. As to expression, testis-specific. Expressed by primary and secondary spermatocytes.

It is found in the membrane. The protein resides in the cytoplasm. Lacks protease activity in vitro. The chain is Serine protease 44 from Mus musculus (Mouse).